The sequence spans 420 residues: Proteasome-activating nucleotidase (420 aa).

The disordered stretch occupies residues 1 to 25; the sequence is MRSHLVKPGSVYDGIEPGELGETTE. Residues 22–79 adopt a coiled-coil conformation; that stretch reads ETTESVQDRVRQLESRNSFLEEQCSQIESEKRYLENQKIKYEREIRKLQSELDRMKTS. ATP-binding positions include 203-208 and histidine 342; that span reads GTGKTL. The tract at residues 418–420 is docks into pockets in the proteasome alpha-ring to cause gate opening; it reads MFV.

It belongs to the AAA ATPase family. In terms of assembly, homohexamer. The hexameric complex has a two-ring architecture resembling a top hat that caps the 20S proteasome core at one or both ends. Upon ATP-binding, the C-terminus of PAN interacts with the alpha-rings of the proteasome core by binding to the intersubunit pockets.

The protein localises to the cytoplasm. Functionally, ATPase which is responsible for recognizing, binding, unfolding and translocation of substrate proteins into the archaeal 20S proteasome core particle. Is essential for opening the gate of the 20S proteasome via an interaction with its C-terminus, thereby allowing substrate entry and access to the site of proteolysis. Thus, the C-termini of the proteasomal ATPase function like a 'key in a lock' to induce gate opening and therefore regulate proteolysis. Unfolding activity requires energy from ATP hydrolysis, whereas ATP binding alone promotes ATPase-20S proteasome association which triggers gate opening, and supports translocation of unfolded substrates. The protein is Proteasome-activating nucleotidase of Methanosarcina mazei (strain ATCC BAA-159 / DSM 3647 / Goe1 / Go1 / JCM 11833 / OCM 88) (Methanosarcina frisia).